We begin with the raw amino-acid sequence, 461 residues long: MVLVITEPIKSQSKTVCVIGAGPSGLVSARELKKEGHKVVVMEQNHDVGGQWLYQPNVDEEDTLGKTKTLKVHSSVYSSLRLASPREVMGFSDFPFIAKEGRDSRRFPGHEELLLYLKDFCQVFGLREMIRFNVRVEFVGMVNEDDDDDDDVKKWMVKSVKKSGEVMEEVFDAVVVASGHYSYPRLPTIKGMDLWKRKQLHSHIYRVPEPFCDEVVVVVGCSMSGQDISIELVEVAKEVHLSTKSLDIPPGLSKVIEKHQNLHLHPQIESLEEDGRVIFEDGSCIVADTILYCTGYEYKFPFLESKGRVEIDDNRVGPLFEHTFSPSLSPFLSFVGIPRKLIGFPFFESQAKWIAKLLSGKTSLPSSDQMMQSISDFYLAREADGIPKRNTHDIADFNYSDKYADYIGFPHLEEWRKVLCLSAILNSIENLETYRDSWDDDDLLQETLQDPYFTQLSIPSV.

An FAD-binding site is contributed by 20-25 (GAGPSG). 220–225 (GCSMSG) provides a ligand contact to NADP(+).

This sequence belongs to the FMO family. As to quaternary structure, interacts with EER5. FAD serves as cofactor.

Functionally, catalyzes the conversion of methylthioalkyl glucosinolates of any chain length into methylsulfinylalkyl glucosinolates. This is Flavin-containing monooxygenase FMO GS-OX-like 8 from Arabidopsis thaliana (Mouse-ear cress).